Consider the following 144-residue polypeptide: Small ribosomal subunit protein uS9 (144 aa).

Thr-2 bears the N-acetylthreonine mark. The interval 124-144 (RRESKKFGGPGARARYQKSYR) is disordered.

It belongs to the universal ribosomal protein uS9 family.

This chain is Small ribosomal subunit protein uS9 (rps-16), found in Caenorhabditis elegans.